Consider the following 197-residue polypeptide: Nucleoid occlusion factor SlmA (197 aa).

The region spanning 7-67 (INRREHILQC…GLIEFIEESL (61 aa)) is the HTH tetR-type domain. The segment at residues 30-49 (TTAKLASEVGVSEAALYRHF) is a DNA-binding region (H-T-H motif).

This sequence belongs to the nucleoid occlusion factor SlmA family. In terms of assembly, homodimer. Interacts with FtsZ.

Its subcellular location is the cytoplasm. The protein localises to the nucleoid. Functionally, required for nucleoid occlusion (NO) phenomenon, which prevents Z-ring formation and cell division over the nucleoid. Acts as a DNA-associated cell division inhibitor that binds simultaneously chromosomal DNA and FtsZ, and disrupts the assembly of FtsZ polymers. SlmA-DNA-binding sequences (SBS) are dispersed on non-Ter regions of the chromosome, preventing FtsZ polymerization at these regions. This chain is Nucleoid occlusion factor SlmA, found in Shewanella oneidensis (strain ATCC 700550 / JCM 31522 / CIP 106686 / LMG 19005 / NCIMB 14063 / MR-1).